A 159-amino-acid polypeptide reads, in one-letter code: 2-C-methyl-D-erythritol 2,4-cyclodiphosphate synthase (159 aa).

2 residues coordinate a divalent metal cation: Asp-10 and His-12. 4-CDP-2-C-methyl-D-erythritol 2-phosphate contacts are provided by residues 10–12 (DVH) and 36–37 (HS). His-44 is an a divalent metal cation binding site. 4-CDP-2-C-methyl-D-erythritol 2-phosphate is bound by residues 58–60 (DIG), 134–137 (TTTE), Phe-141, and Arg-144.

This sequence belongs to the IspF family. In terms of assembly, homotrimer. The cofactor is a divalent metal cation.

The enzyme catalyses 4-CDP-2-C-methyl-D-erythritol 2-phosphate = 2-C-methyl-D-erythritol 2,4-cyclic diphosphate + CMP. It functions in the pathway isoprenoid biosynthesis; isopentenyl diphosphate biosynthesis via DXP pathway; isopentenyl diphosphate from 1-deoxy-D-xylulose 5-phosphate: step 4/6. In terms of biological role, involved in the biosynthesis of isopentenyl diphosphate (IPP) and dimethylallyl diphosphate (DMAPP), two major building blocks of isoprenoid compounds. Catalyzes the conversion of 4-diphosphocytidyl-2-C-methyl-D-erythritol 2-phosphate (CDP-ME2P) to 2-C-methyl-D-erythritol 2,4-cyclodiphosphate (ME-CPP) with a corresponding release of cytidine 5-monophosphate (CMP). The chain is 2-C-methyl-D-erythritol 2,4-cyclodiphosphate synthase from Bacteroides fragilis (strain YCH46).